The primary structure comprises 176 residues: MRHRRALLFLTGAAVFVSALTAAAITGGYRLNLTPSEPLGLWRIEQLQRPVAIGDLVFLCPPSTAVFAEARVRGYLRRGLCAGGVAPLIKTVAALPGQRVEITDHVHIDGRSVPASSVSGTDGDGKVLLPDSGGVVPPHHLFLHSSFASSYDSRYFGPVPDSGLLSLARPVFTFHP.

The N-terminal stretch at 1 to 23 (MRHRRALLFLTGAAVFVSALTAA) is a signal peptide.

The protein belongs to the peptidase S26C family.

The protein localises to the periplasm. Functionally, involved in conjugal transfer of the plasmid. The protein is Conjugal transfer protein TraF (traF) of Agrobacterium tumefaciens (strain 15955).